A 332-amino-acid chain; its full sequence is Transcription regulatory protein SNF6 (332 aa).

The short motif at 2–8 is the Nuclear localization signal element; the sequence is GVIKKKR. Threonine 165 carries the phosphothreonine modification. Residues 278-299 are disordered; it reads VTTVASQSPHATATEKEPVPAV.

In terms of assembly, component of the SWI/SNF global transcription activator complex. The 1.14 MDa SWI/SNF complex is composed of 11 different subunits: one copy each of SWI1, SNF2/SWI2, SNF5, SNF12/SWP73, ARP7/SWP61, ARP9/SWP59; two copies each of SWI3, SNF6, SNF11, SWP82; and three copies of TAF14/SWP29.

Its subcellular location is the nucleus. In terms of biological role, involved in transcriptional activation. Component of the SWI/SNF complex, an ATP-dependent chromatin remodeling complex, which is required for the positive and negative regulation of gene expression of a large number of genes. It changes chromatin structure by altering DNA-histone contacts within a nucleosome, leading eventually to a change in nucleosome position, thus facilitating or repressing binding of gene-specific transcription factors. In Saccharomyces cerevisiae (strain ATCC 204508 / S288c) (Baker's yeast), this protein is Transcription regulatory protein SNF6 (SNF6).